Consider the following 344-residue polypeptide: MDITELLAFSAKQGASDLHLSAGLPPMIRVDGDVRRINLPPLEHKQVHALIYDIMNDKQRKDFEEFLETDFSFEVPGVARFRVNAFNQNRGAGAVFRTIPSKVLTMEELGMGEVFKRVSDVPRGLVLVTGPTGSGKSTTLAAMLDYLNNTKYHHILTIEDPIEFVHESKKCLVNQREVHRDTLGFSEALRSALREDPDIILVGEMRDLETIRLALTAAETGHLVFGTLHTTSAAKTIDRVVDVFPAEEKAMVRSMLSESLQSVISQTLIKKIGGGRVAAHEIMIGTPAIRNLIREDKVAQMYSAIQTGGSLGMQTLDMCLKGLVAKGLISRENAREKAKIPENF.

ATP is bound by residues Arg82 and 133-138 (GSGKST).

This sequence belongs to the GSP E family. In terms of assembly, homohexamer. Interacts with PilU.

It is found in the cytoplasm. ATPase component of the type IV pilus (T4P) that plays a role in surface and host cell adhesion, colonization, biofilm maturation, virulence, and twitching, a form of surface-associated motility facilitated by cycles of extension, adhesion, and retraction of T4P fibers. Acts as a molecular motor to provide the energy that is required for T4P retraction while antagonist PilB ATPase activity is required for T4P extension. Also promotes PilU retractation activity through direct interaction. This is Type IV pilus retractation ATPase PilT (pilT) from Pseudomonas aeruginosa (strain ATCC 15692 / DSM 22644 / CIP 104116 / JCM 14847 / LMG 12228 / 1C / PRS 101 / PAO1).